A 306-amino-acid polypeptide reads, in one-letter code: Ribonuclease Z (306 aa).

7 residues coordinate Zn(2+): histidine 63, histidine 65, aspartate 67, histidine 68, histidine 141, aspartate 211, and histidine 269. Aspartate 67 (proton acceptor) is an active-site residue.

Belongs to the RNase Z family. As to quaternary structure, homodimer. The cofactor is Zn(2+).

It carries out the reaction Endonucleolytic cleavage of RNA, removing extra 3' nucleotides from tRNA precursor, generating 3' termini of tRNAs. A 3'-hydroxy group is left at the tRNA terminus and a 5'-phosphoryl group is left at the trailer molecule.. Its function is as follows. Zinc phosphodiesterase, which displays some tRNA 3'-processing endonuclease activity. Probably involved in tRNA maturation, by removing a 3'-trailer from precursor tRNA. In Staphylococcus aureus (strain MSSA476), this protein is Ribonuclease Z.